The following is a 521-amino-acid chain: Glutamate--cysteine ligase (521 aa).

The protein belongs to the glutamate--cysteine ligase type 1 family. Type 1 subfamily.

The catalysed reaction is L-cysteine + L-glutamate + ATP = gamma-L-glutamyl-L-cysteine + ADP + phosphate + H(+). It participates in sulfur metabolism; glutathione biosynthesis; glutathione from L-cysteine and L-glutamate: step 1/2. This Aliivibrio salmonicida (strain LFI1238) (Vibrio salmonicida (strain LFI1238)) protein is Glutamate--cysteine ligase.